The following is a 262-amino-acid chain: Ribosomal RNA small subunit methyltransferase A (262 aa).

Positions 14, 16, 41, 62, 87, and 109 each coordinate S-adenosyl-L-methionine.

It belongs to the class I-like SAM-binding methyltransferase superfamily. rRNA adenine N(6)-methyltransferase family. RsmA subfamily.

It is found in the cytoplasm. It catalyses the reaction adenosine(1518)/adenosine(1519) in 16S rRNA + 4 S-adenosyl-L-methionine = N(6)-dimethyladenosine(1518)/N(6)-dimethyladenosine(1519) in 16S rRNA + 4 S-adenosyl-L-homocysteine + 4 H(+). Its function is as follows. Specifically dimethylates two adjacent adenosines (A1518 and A1519) in the loop of a conserved hairpin near the 3'-end of 16S rRNA in the 30S particle. May play a critical role in biogenesis of 30S subunits. In Francisella tularensis subsp. novicida (strain U112), this protein is Ribosomal RNA small subunit methyltransferase A.